Here is a 259-residue protein sequence, read N- to C-terminus: Global transcriptional regulator CodY (259 aa).

The segment at 1 to 155 (MNLLEKTRKI…GATVVGMEIL (155 aa)) is GAF domain. Residues 203-222 (ASKIADRVGITRSVIVNALR) constitute a DNA-binding region (H-T-H motif). Phosphoserine is present on serine 215.

It belongs to the CodY family.

Its subcellular location is the cytoplasm. DNA-binding global transcriptional regulator which is involved in the adaptive response to starvation and acts by directly or indirectly controlling the expression of numerous genes in response to nutrient availability. During rapid exponential growth, CodY is highly active and represses genes whose products allow adaptation to nutrient depletion. In Geobacillus kaustophilus (strain HTA426), this protein is Global transcriptional regulator CodY.